The sequence spans 1400 residues: S phase cyclin A-associated protein in the endoplasmic reticulum (1400 aa).

Disordered regions lie at residues 36–61 (ESKD…GTHK), 226–277 (VKAH…IRSR), 517–550 (PARP…HEEK), and 701–723 (RIEQ…RARD). Polar residues predominate over residues 231 to 243 (TGSTASSEITPAQ). Residues 539–550 (TIAESKKKHEEK) are compositionally biased toward basic and acidic residues. The C2H2-type zinc finger occupies 792 to 816 (KQCSLCNVLISSEVYLFSHVKGRKH). A Phosphoserine modification is found at S832.

Interacts with CCNA2/CDK2 complex, but not with CCNA2/CDC2, CCNB1/CDC2 or CCNE1/CDK2 complexes, at multiple phases of the cell cycle, including S and G2/M. Post-translationally, phosphorylated in vitro by the CCNA2/CDK2 complex. As to expression, widely expressed with high expression in testis. Isoform 1 is detected in various tissues, including retina, fetal and adult brain. Isoform 2 is expressed in the retina at high levels, and in the brain at very low levels.

It is found in the endoplasmic reticulum. The protein resides in the nucleus. CCNA2/CDK2 regulatory protein that transiently maintains CCNA2 in the cytoplasm. The polypeptide is S phase cyclin A-associated protein in the endoplasmic reticulum (Homo sapiens (Human)).